The sequence spans 218 residues: N-(5'-phosphoribosyl)anthranilate isomerase (218 aa).

It belongs to the TrpF family.

The catalysed reaction is N-(5-phospho-beta-D-ribosyl)anthranilate = 1-(2-carboxyphenylamino)-1-deoxy-D-ribulose 5-phosphate. The protein operates within amino-acid biosynthesis; L-tryptophan biosynthesis; L-tryptophan from chorismate: step 3/5. This Stenotrophomonas maltophilia (strain R551-3) protein is N-(5'-phosphoribosyl)anthranilate isomerase.